We begin with the raw amino-acid sequence, 516 residues long: Maturase K (516 aa).

It belongs to the intron maturase 2 family. MatK subfamily.

The protein localises to the plastid. The protein resides in the chloroplast. Its function is as follows. Usually encoded in the trnK tRNA gene intron. Probably assists in splicing its own and other chloroplast group II introns. The polypeptide is Maturase K (Chara connivens (Convergent stonewort)).